We begin with the raw amino-acid sequence, 126 residues long: Large ribosomal subunit protein bL20 (126 aa).

The protein belongs to the bacterial ribosomal protein bL20 family.

Its function is as follows. Binds directly to 23S ribosomal RNA and is necessary for the in vitro assembly process of the 50S ribosomal subunit. It is not involved in the protein synthesizing functions of that subunit. The chain is Large ribosomal subunit protein bL20 from Buchnera aphidicola subsp. Baizongia pistaciae (strain Bp).